A 118-amino-acid chain; its full sequence is Probable mitochondrial pyruvate carrier 2 (118 aa).

The next 3 helical transmembrane spans lie at 19–35 (VHFW…LSGI), 50–66 (YAAL…WSLI), and 72–94 (YFNA…RILV).

Belongs to the mitochondrial pyruvate carrier (MPC) (TC 2.A.105) family. The functional 150 kDa pyruvate import complex is a heteromer of mpc1 and mpc2.

Its subcellular location is the mitochondrion inner membrane. Mediates the uptake of pyruvate into mitochondria. This is Probable mitochondrial pyruvate carrier 2 from Schizosaccharomyces pombe (strain 972 / ATCC 24843) (Fission yeast).